The chain runs to 199 residues: Large ribosomal subunit protein bL25 (199 aa).

This sequence belongs to the bacterial ribosomal protein bL25 family. CTC subfamily. In terms of assembly, part of the 50S ribosomal subunit; part of the 5S rRNA/L5/L18/L25 subcomplex. Contacts the 5S rRNA. Binds to the 5S rRNA independently of L5 and L18.

In terms of biological role, this is one of the proteins that binds to the 5S RNA in the ribosome where it forms part of the central protuberance. This Caldanaerobacter subterraneus subsp. tengcongensis (strain DSM 15242 / JCM 11007 / NBRC 100824 / MB4) (Thermoanaerobacter tengcongensis) protein is Large ribosomal subunit protein bL25.